We begin with the raw amino-acid sequence, 230 residues long: Orotidine 5'-phosphate decarboxylase (230 aa).

Substrate contacts are provided by residues Asp-10, Lys-31, Asp-58 to Thr-67, Thr-117, Arg-179, Gln-188, Gly-208, and Arg-209. The Proton donor role is filled by Lys-60.

This sequence belongs to the OMP decarboxylase family. Type 1 subfamily. Homodimer.

It catalyses the reaction orotidine 5'-phosphate + H(+) = UMP + CO2. It functions in the pathway pyrimidine metabolism; UMP biosynthesis via de novo pathway; UMP from orotate: step 2/2. Catalyzes the decarboxylation of orotidine 5'-monophosphate (OMP) to uridine 5'-monophosphate (UMP). The protein is Orotidine 5'-phosphate decarboxylase of Staphylococcus aureus (strain Mu3 / ATCC 700698).